A 66-amino-acid polypeptide reads, in one-letter code: Small ribosomal subunit protein eS27 (66 aa).

Residues C21, C24, C40, and C43 each coordinate Zn(2+). Residues 21 to 43 form a C4-type zinc finger; it reads CPNCGNEQTVFSHATFPVRCLSC.

The protein belongs to the eukaryotic ribosomal protein eS27 family. In terms of assembly, part of the 30S ribosomal subunit. The cofactor is Zn(2+).

This is Small ribosomal subunit protein eS27 from Sulfurisphaera tokodaii (strain DSM 16993 / JCM 10545 / NBRC 100140 / 7) (Sulfolobus tokodaii).